Reading from the N-terminus, the 286-residue chain is Bifunctional protein FolD (286 aa).

NADP(+)-binding positions include 164-166 (GTS) and Ile230.

It belongs to the tetrahydrofolate dehydrogenase/cyclohydrolase family. Homodimer.

The catalysed reaction is (6R)-5,10-methylene-5,6,7,8-tetrahydrofolate + NADP(+) = (6R)-5,10-methenyltetrahydrofolate + NADPH. The enzyme catalyses (6R)-5,10-methenyltetrahydrofolate + H2O = (6R)-10-formyltetrahydrofolate + H(+). It functions in the pathway one-carbon metabolism; tetrahydrofolate interconversion. Catalyzes the oxidation of 5,10-methylenetetrahydrofolate to 5,10-methenyltetrahydrofolate and then the hydrolysis of 5,10-methenyltetrahydrofolate to 10-formyltetrahydrofolate. The protein is Bifunctional protein FolD of Mesoplasma florum (strain ATCC 33453 / NBRC 100688 / NCTC 11704 / L1) (Acholeplasma florum).